The chain runs to 136 residues: IIFPGTLWCGNGNLANGTNQLGSWKETDSCCRTHDMCPDLIEAHGSKHGLTNAADYTRLSCECDEEFRRCLHNSGDTVSAGFVGRTYFTVLHTQCFRLDYPIVKCKVKSTILHRSKCYDFETFAPKKYQWFDVLQY.

Residues W8, G10, and G12 each coordinate Ca(2+). Intrachain disulfides connect C9–C31, C30–C70, C37–C63, C61–C95, and C105–C117. N16 carries an N-linked (GlcNAc...) asparagine glycan. H34 is a catalytic residue. Ca(2+) is bound at residue D35. D64 is a catalytic residue.

It belongs to the phospholipase A2 family. The cofactor is Ca(2+). As to expression, expressed by the venom gland.

It is found in the secreted. It carries out the reaction a 1,2-diacyl-sn-glycero-3-phosphocholine + H2O = a 1-acyl-sn-glycero-3-phosphocholine + a fatty acid + H(+). Functionally, PLA2 catalyzes the calcium-dependent hydrolysis of the 2-acyl groups in 3-sn-phosphoglycerides. The polypeptide is Phospholipase A2 (Bombus terrestris (Buff-tailed bumblebee)).